We begin with the raw amino-acid sequence, 199 residues long: Securin (199 aa).

Disordered regions lie at residues 1–23 (MATL…SKDG) and 58–108 (RKAL…DDAY). N-acetylalanine is present on Ala-2. Basic and acidic residues predominate over residues 7-23 (VDKDNEEPGSRLASKDG). The D-box motif lies at 58–61 (RKAL). Residues 68 to 70 (TEK) carry the TEK-box 1 motif. The span at 76–85 (KPLQSKQPTL) shows a compositional bias: polar residues. Residues 91–93 (TEK) carry the TEK-box 2 motif. Phosphoserine is present on Ser-162. Residues 179-192 (PPSALSALDVELPP) carry the SH3-binding motif.

It belongs to the securin family. Interacts with the caspase-like ESPL1, and prevents its protease activity by covering its active site. Interacts with p53/TP53 and blocks its activity probably by blocking its binding to DNA. Interacts with the Ku 70 kDa subunit of ds-DNA kinase. Interacts with PTTG1IP. Interacts with RPS10 and DNAJA1. In terms of processing, phosphorylated at Ser-162 by CDK1 during mitosis. Phosphorylated in vitro by ds-DNA kinase. Post-translationally, ubiquitinated through 'Lys-11' linkage of ubiquitin moieties by the anaphase promoting complex (APC) at the onset of anaphase, conducting to its degradation. 'Lys-11'-linked ubiquitination is mediated by the E2 ligase UBE2C/UBCH10. Expressed at low level in most tissues, except in adult testis, where it is highly expressed. Expressed in both spermatocytes and spermatids.

The protein resides in the cytoplasm. Its subcellular location is the nucleus. Its function is as follows. Regulatory protein, which plays a central role in chromosome stability, in the p53/TP53 pathway, and DNA repair. Probably acts by blocking the action of key proteins. During the mitosis, it blocks Separase/ESPL1 function, preventing the proteolysis of the cohesin complex and the subsequent segregation of the chromosomes. At the onset of anaphase, it is ubiquitinated, conducting to its destruction and to the liberation of ESPL1. Its function is however not limited to a blocking activity, since it is required to activate ESPL1. Negatively regulates the transcriptional activity and related apoptosis activity of p53/TP53. The negative regulation of p53/TP53 may explain the strong transforming capability of the protein when it is overexpressed. May also play a role in DNA repair via its interaction with Ku, possibly by connecting DNA damage-response pathways with sister chromatid separation. The polypeptide is Securin (Pttg1) (Rattus norvegicus (Rat)).